The primary structure comprises 587 residues: 5-aminolevulinate synthase, erythroid-specific, mitochondrial (587 aa).

The N-terminal 49 residues, 1–49, are a transit peptide targeting the mitochondrion; sequence MVTAAMLLQCCPVPARGPTSLLGKVVKTHQFLFGIGRCPILATQGPNCS. Residue Arg163 participates in succinyl-CoA binding. Residues Cys258 and Phe259 each coordinate pyridoxal 5'-phosphate. Ser280 and Lys299 together coordinate succinyl-CoA. The pyridoxal 5'-phosphate site is built by Ser332, His360, and Thr388. The active site involves Lys391. Lys391 carries the post-translational modification N6-(pyridoxal phosphate)lysine. Residues Thr420 and Thr421 each coordinate pyridoxal 5'-phosphate. Thr508 lines the succinyl-CoA pocket.

Belongs to the class-II pyridoxal-phosphate-dependent aminotransferase family. Homodimer. Interacts with SUCLA2. Pyridoxal 5'-phosphate serves as cofactor.

Its subcellular location is the mitochondrion inner membrane. The catalysed reaction is succinyl-CoA + glycine + H(+) = 5-aminolevulinate + CO2 + CoA. It participates in porphyrin-containing compound metabolism; protoporphyrin-IX biosynthesis; 5-aminolevulinate from glycine: step 1/1. Its function is as follows. Catalyzes the pyridoxal 5'-phosphate (PLP)-dependent condensation of succinyl-CoA and glycine to form aminolevulinic acid (ALA), with CoA and CO2 as by-products. Contributes significantly to heme formation during erythropoiesis. The chain is 5-aminolevulinate synthase, erythroid-specific, mitochondrial (ALAS2) from Pongo abelii (Sumatran orangutan).